Here is a 60-residue protein sequence, read N- to C-terminus: UPF0434 protein Rfer_3156 (60 aa).

Belongs to the UPF0434 family.

In Albidiferax ferrireducens (strain ATCC BAA-621 / DSM 15236 / T118) (Rhodoferax ferrireducens), this protein is UPF0434 protein Rfer_3156.